The primary structure comprises 243 residues: Small ribosomal subunit protein eS4 (243 aa).

In terms of domain architecture, S4 RNA-binding spans isoleucine 43–asparagine 105.

It belongs to the eukaryotic ribosomal protein eS4 family.

The polypeptide is Small ribosomal subunit protein eS4 (rps4e) (Pyrococcus horikoshii (strain ATCC 700860 / DSM 12428 / JCM 9974 / NBRC 100139 / OT-3)).